A 132-amino-acid chain; its full sequence is Large ribosomal subunit protein bL21 (132 aa).

The interval 112-132 (AEKPARKPRAKKTNEVTTDGA) is disordered.

This sequence belongs to the bacterial ribosomal protein bL21 family. In terms of assembly, part of the 50S ribosomal subunit. Contacts protein L20.

Functionally, this protein binds to 23S rRNA in the presence of protein L20. This is Large ribosomal subunit protein bL21 from Dehalococcoides mccartyi (strain ATCC BAA-2266 / KCTC 15142 / 195) (Dehalococcoides ethenogenes (strain 195)).